The sequence spans 136 residues: Large ribosomal subunit protein uL16c (136 aa).

Belongs to the universal ribosomal protein uL16 family. As to quaternary structure, part of the 50S ribosomal subunit.

It is found in the plastid. The protein resides in the chloroplast. This Illicium oligandrum (Star anise) protein is Large ribosomal subunit protein uL16c.